A 342-amino-acid chain; its full sequence is Nucleoid-associated protein SO_2177 (342 aa).

This sequence belongs to the YejK family.

The protein resides in the cytoplasm. Its subcellular location is the nucleoid. The sequence is that of Nucleoid-associated protein SO_2177 from Shewanella oneidensis (strain ATCC 700550 / JCM 31522 / CIP 106686 / LMG 19005 / NCIMB 14063 / MR-1).